Here is a 316-residue protein sequence, read N- to C-terminus: tRNA dimethylallyltransferase (316 aa).

An ATP-binding site is contributed by 17–24; it reads GPTASGKT. 19–24 serves as a coordination point for substrate; that stretch reads TASGKT. Interaction with substrate tRNA stretches follow at residues 42-45, 166-170, 247-252, and 280-287; these read DSAL, QRLSR, RCVGYR, and KRQITWLR.

It belongs to the IPP transferase family. In terms of assembly, monomer. Requires Mg(2+) as cofactor.

The catalysed reaction is adenosine(37) in tRNA + dimethylallyl diphosphate = N(6)-dimethylallyladenosine(37) in tRNA + diphosphate. In terms of biological role, catalyzes the transfer of a dimethylallyl group onto the adenine at position 37 in tRNAs that read codons beginning with uridine, leading to the formation of N6-(dimethylallyl)adenosine (i(6)A). In Escherichia coli O81 (strain ED1a), this protein is tRNA dimethylallyltransferase.